A 215-amino-acid chain; its full sequence is MLQVYLVRHGETEWNAARRIQGQSDSPLTANGEHQARLVAQRVSKQGITHVITSDLGRTRRTAQIIAEACGCEVINDPRLRELHMGVLEERLIDSLTPQEEQWRKQMVDGTADGRIPQGESMSELGDRMREALESCLMLPEGSKPLIVSHGIALGCLISTVLGLPAYAERRLRLRNCSLSRVDHQQSPWLASGWIVETAGDVTHLDTPALDELQR.

Substrate contacts are provided by residues arginine 8–asparagine 15, glutamine 21–glycine 22, arginine 58, arginine 60, glutamate 82–methionine 85, and glycine 151–isoleucine 152. Catalysis depends on histidine 9, which acts as the Tele-phosphohistidine intermediate. Glutamate 82 functions as the Proton donor/acceptor in the catalytic mechanism.

Belongs to the phosphoglycerate mutase family. GpmB subfamily.

The enzyme catalyses (2R)-2-phosphoglycerate = (2R)-3-phosphoglycerate. It participates in carbohydrate degradation; glycolysis; pyruvate from D-glyceraldehyde 3-phosphate: step 3/5. This chain is Probable phosphoglycerate mutase GpmB, found in Serratia proteamaculans (strain 568).